Reading from the N-terminus, the 394-residue chain is Tryptophan synthase beta chain (394 aa).

Position 84 is an N6-(pyridoxal phosphate)lysine (Lys84).

This sequence belongs to the TrpB family. Tetramer of two alpha and two beta chains. Requires pyridoxal 5'-phosphate as cofactor.

It catalyses the reaction (1S,2R)-1-C-(indol-3-yl)glycerol 3-phosphate + L-serine = D-glyceraldehyde 3-phosphate + L-tryptophan + H2O. Its pathway is amino-acid biosynthesis; L-tryptophan biosynthesis; L-tryptophan from chorismate: step 5/5. Its function is as follows. The beta subunit is responsible for the synthesis of L-tryptophan from indole and L-serine. This is Tryptophan synthase beta chain from Clostridium acetobutylicum (strain ATCC 824 / DSM 792 / JCM 1419 / IAM 19013 / LMG 5710 / NBRC 13948 / NRRL B-527 / VKM B-1787 / 2291 / W).